Consider the following 138-residue polypeptide: Large ribosomal subunit protein uL16 (138 aa).

Positions 1–13 are enriched in basic residues; it reads MLQPARRKYRKEQ. Residues 1 to 22 form a disordered region; that stretch reads MLQPARRKYRKEQKGRNTGIAT.

The protein belongs to the universal ribosomal protein uL16 family. As to quaternary structure, part of the 50S ribosomal subunit.

Functionally, binds 23S rRNA and is also seen to make contacts with the A and possibly P site tRNAs. In Delftia acidovorans (strain DSM 14801 / SPH-1), this protein is Large ribosomal subunit protein uL16.